The following is a 301-amino-acid chain: GTPase Era (301 aa).

Residues 7-175 (YCGFIAIVGR…AAIVRKHLPE (169 aa)) form the Era-type G domain. The tract at residues 15-22 (GRPNVGKS) is G1. A GTP-binding site is contributed by 15 to 22 (GRPNVGKS). The segment at 41-45 (QTTRH) is G2. Positions 62–65 (DTPG) are G3. GTP contacts are provided by residues 62 to 66 (DTPGL) and 124 to 127 (NKVD). A G4 region spans residues 124-127 (NKVD). Residues 154-156 (ISA) form a G5 region. The region spanning 206 to 283 (LGAELPYSVT…HLELWVKVKS (78 aa)) is the KH type-2 domain.

The protein belongs to the TRAFAC class TrmE-Era-EngA-EngB-Septin-like GTPase superfamily. Era GTPase family. As to quaternary structure, monomer.

It is found in the cytoplasm. The protein resides in the cell inner membrane. Functionally, an essential GTPase that binds both GDP and GTP, with rapid nucleotide exchange. Plays a role in 16S rRNA processing and 30S ribosomal subunit biogenesis and possibly also in cell cycle regulation and energy metabolism. The chain is GTPase Era from Escherichia coli O157:H7.